The sequence spans 218 residues: Octanoyltransferase (218 aa).

The BPL/LPL catalytic domain occupies Ile32–Ile211. Substrate-binding positions include Arg75–His82, Ser142–Gly144, and Gly155–Ser157. Catalysis depends on Cys173, which acts as the Acyl-thioester intermediate.

This sequence belongs to the LipB family.

The protein localises to the cytoplasm. It carries out the reaction octanoyl-[ACP] + L-lysyl-[protein] = N(6)-octanoyl-L-lysyl-[protein] + holo-[ACP] + H(+). It participates in protein modification; protein lipoylation via endogenous pathway; protein N(6)-(lipoyl)lysine from octanoyl-[acyl-carrier-protein]: step 1/2. Catalyzes the transfer of endogenously produced octanoic acid from octanoyl-acyl-carrier-protein onto the lipoyl domains of lipoate-dependent enzymes. Lipoyl-ACP can also act as a substrate although octanoyl-ACP is likely to be the physiological substrate. This Buchnera aphidicola subsp. Schizaphis graminum (strain Sg) protein is Octanoyltransferase.